The following is an 839-amino-acid chain: Probable alpha-glucuronidase A (839 aa).

An N-terminal signal peptide occupies residues 1–18; it reads MRWSFLTVLLWLVSLTGA. Residues N49, N101, N148, N221, N278, N309, N342, N464, N526, N575, N681, and N731 are each glycosylated (N-linked (GlcNAc...) asparagine).

It belongs to the glycosyl hydrolase 67 family.

The protein localises to the secreted. It catalyses the reaction an alpha-D-glucuronoside + H2O = D-glucuronate + an alcohol. In terms of biological role, alpha-glucuronidase involved in the hydrolysis of xylan, a major structural heterogeneous polysaccharide found in plant biomass representing the second most abundant polysaccharide in the biosphere, after cellulose. Releases 4-O-methylglucuronic acid from xylan. The sequence is that of Probable alpha-glucuronidase A (aguA) from Aspergillus flavus (strain ATCC 200026 / FGSC A1120 / IAM 13836 / NRRL 3357 / JCM 12722 / SRRC 167).